The primary structure comprises 647 residues: Threonine--tRNA ligase (647 aa).

Positions 1–61 constitute a TGS domain; it reads MINITFPDGA…TEDGSIEIVT (61 aa). The catalytic stretch occupies residues 242-540; sequence DHRKLGKELD…LIENYKGAFP (299 aa). Zn(2+) contacts are provided by Cys336, His387, and His517.

The protein belongs to the class-II aminoacyl-tRNA synthetase family. In terms of assembly, homodimer. It depends on Zn(2+) as a cofactor.

The protein resides in the cytoplasm. The enzyme catalyses tRNA(Thr) + L-threonine + ATP = L-threonyl-tRNA(Thr) + AMP + diphosphate + H(+). Catalyzes the attachment of threonine to tRNA(Thr) in a two-step reaction: L-threonine is first activated by ATP to form Thr-AMP and then transferred to the acceptor end of tRNA(Thr). Also edits incorrectly charged L-seryl-tRNA(Thr). The sequence is that of Threonine--tRNA ligase from Streptococcus pneumoniae serotype 2 (strain D39 / NCTC 7466).